The chain runs to 289 residues: Phosphatidylglycerol--prolipoprotein diacylglyceryl transferase (289 aa).

3 consecutive transmembrane segments (helical) span residues 13–33 (LGPLAIRWYALAYVAGILLGW), 61–81 (FILWVTLAIIVGGRLGHVLFY), and 99–119 (GGMSFHGGAIGVFLAIILFAM). Position 144 (arginine 144) interacts with a 1,2-diacyl-sn-glycero-3-phospho-(1'-sn-glycerol). Helical transmembrane passes span 218–238 (GVVMGLFTTFYAVFRISLENV) and 250–270 (LGLTMGIYLSIPMLLFGLWLI).

The protein belongs to the Lgt family.

Its subcellular location is the cell inner membrane. The enzyme catalyses L-cysteinyl-[prolipoprotein] + a 1,2-diacyl-sn-glycero-3-phospho-(1'-sn-glycerol) = an S-1,2-diacyl-sn-glyceryl-L-cysteinyl-[prolipoprotein] + sn-glycerol 1-phosphate + H(+). The protein operates within protein modification; lipoprotein biosynthesis (diacylglyceryl transfer). Its function is as follows. Catalyzes the transfer of the diacylglyceryl group from phosphatidylglycerol to the sulfhydryl group of the N-terminal cysteine of a prolipoprotein, the first step in the formation of mature lipoproteins. This is Phosphatidylglycerol--prolipoprotein diacylglyceryl transferase from Phenylobacterium zucineum (strain HLK1).